The following is a 79-amino-acid chain: D-alanyl carrier protein (79 aa).

The Carrier domain occupies 1–77 (MDIKSEVLAI…KIVAGVTELC (77 aa)). At Ser35 the chain carries O-(pantetheine 4'-phosphoryl)serine.

The protein belongs to the DltC family. 4'-phosphopantetheine is transferred from CoA to a specific serine of apo-DCP.

It localises to the cytoplasm. It functions in the pathway cell wall biogenesis; lipoteichoic acid biosynthesis. In terms of biological role, carrier protein involved in the D-alanylation of lipoteichoic acid (LTA). The loading of thioester-linked D-alanine onto DltC is catalyzed by D-alanine--D-alanyl carrier protein ligase DltA. The DltC-carried D-alanyl group is further transferred to cell membrane phosphatidylglycerol (PG) by forming an ester bond, probably catalyzed by DltD. D-alanylation of LTA plays an important role in modulating the properties of the cell wall in Gram-positive bacteria, influencing the net charge of the cell wall. In Streptococcus agalactiae serotype Ia (strain ATCC 27591 / A909 / CDC SS700), this protein is D-alanyl carrier protein.